The following is a 212-amino-acid chain: MAVAANKRSVMTLFSGPTDIYSHQVRIVLAEKGVSFEIEHVEKDNPPQDLIDLNPNQSVPTLVDRELTLWESRIIMEYLDERFPHPPLMPVYPVARGESRLYMHRIEKDWYTLMNTIINGSASEADAARKQLREELLAIAPVFGQKPYFLSDEFSLVDCYLAPLLWRLPQLGIEFSGPGAKELKGYMTRVFERDSFLASLTEAEREMRLGRS.

Positions 9-87 constitute a GST N-terminal domain; it reads SVMTLFSGPT…YLDERFPHPP (79 aa). Residues 92–209 form the GST C-terminal domain; the sequence is YPVARGESRL…LTEAEREMRL (118 aa).

It belongs to the GST superfamily. HSP26 family.

Functionally, forms an equimolar complex with the RNA polymerase holoenzyme (RNAP) but not with the core enzyme. The polypeptide is Stringent starvation protein A (sspA) (Escherichia coli O157:H7).